A 522-amino-acid polypeptide reads, in one-letter code: MSNRVIIFDTTLRDGEQALAASLSVKEKLQIAMALERLGVDVMEVGFPVSSPGDFESVQTIARTIKNSRVCALSRALEKDIDAAAQALSVADQFRIHTFISTSTIHVESKLKRSFDQVLEMAVSAVKYARRFTDDVEFSCEDAGRTPIENLCRMVEAAILAGARTINIPDTVGYTVPSEFGNIIQTLFNRVPNIDQAVISVHCHDDLGLSVANSITAVQHGARQIECTINGIGERAGNCSLEEIAMILATRKGMLGLETGINAKEIHRTSNLVSQLCNMPVQANKAIVGANAFTHSSGIHQDGMLKAQNTYEIMTPESIGLNRNNLNMTSRSGRHVIKHRMEEMGYSEHDYNMDALYEEFLKLADKKGQVFDYDLEALAFMEAQAEEDNHYQLQQLVVQSDSTEGVATATVRIEVGGEIKTEAATGNGPVDAAYNAIARATDRRIDIISYKLGAKGVGQNALGQVDITAVYHEQNFHGVGLATDVVEASARALVHVMNLTCRADKVADYKQSMQKNRELGGV.

One can recognise a Pyruvate carboxyltransferase domain in the interval 5 to 267 (VIIFDTTLRD…ETGINAKEIH (263 aa)). 4 residues coordinate Mn(2+): Asp14, His202, His204, and Asn238. The tract at residues 392 to 522 (QLQQLVVQSD…MQKNRELGGV (131 aa)) is regulatory domain.

Belongs to the alpha-IPM synthase/homocitrate synthase family. LeuA type 1 subfamily. As to quaternary structure, homodimer. The cofactor is Mn(2+).

Its subcellular location is the cytoplasm. The enzyme catalyses 3-methyl-2-oxobutanoate + acetyl-CoA + H2O = (2S)-2-isopropylmalate + CoA + H(+). It functions in the pathway amino-acid biosynthesis; L-leucine biosynthesis; L-leucine from 3-methyl-2-oxobutanoate: step 1/4. In terms of biological role, catalyzes the condensation of the acetyl group of acetyl-CoA with 3-methyl-2-oxobutanoate (2-ketoisovalerate) to form 3-carboxy-3-hydroxy-4-methylpentanoate (2-isopropylmalate). This is 2-isopropylmalate synthase from Shewanella baltica (strain OS195).